A 132-amino-acid polypeptide reads, in one-letter code: Small ribosomal subunit protein uS8 (132 aa).

The protein belongs to the universal ribosomal protein uS8 family. Part of the 30S ribosomal subunit. Contacts proteins S5 and S12.

In terms of biological role, one of the primary rRNA binding proteins, it binds directly to 16S rRNA central domain where it helps coordinate assembly of the platform of the 30S subunit. This is Small ribosomal subunit protein uS8 from Pediococcus pentosaceus (strain ATCC 25745 / CCUG 21536 / LMG 10740 / 183-1w).